The sequence spans 545 residues: Membrane protein insertase YidC (545 aa).

Residues 6-26 (FVLFVFFIFLSFLLWEQWQID) form a helical membrane-spanning segment. Residues 32–69 (QAVAQTDGASRPAGDLPQRPSDDESDVTVHTEAPTQEG) are disordered. Helical transmembrane passes span 354-374 (FFNN…ALFF), 425-445 (GGCL…WVLV), 462-482 (LSSK…MFIQ), and 500-520 (FFPL…VLYW).

This sequence belongs to the OXA1/ALB3/YidC family. Type 1 subfamily. Interacts with the Sec translocase complex via SecD. Specifically interacts with transmembrane segments of nascent integral membrane proteins during membrane integration.

The protein resides in the cell inner membrane. Its function is as follows. Required for the insertion and/or proper folding and/or complex formation of integral membrane proteins into the membrane. Involved in integration of membrane proteins that insert both dependently and independently of the Sec translocase complex, as well as at least some lipoproteins. Aids folding of multispanning membrane proteins. In Methylococcus capsulatus (strain ATCC 33009 / NCIMB 11132 / Bath), this protein is Membrane protein insertase YidC.